Here is a 380-residue protein sequence, read N- to C-terminus: Glycine betaine/carnitine/choline transport ATP-binding protein OpuCA (380 aa).

The 235-residue stretch at 2–236 (LKLEQVSKVY…PANEFVEEFI (235 aa)) folds into the ABC transporter domain. Residue 35–42 (GPSGCGKT) participates in ATP binding. CBS domains lie at 255-314 (MNRT…VGDV) and 315-373 (YRSD…WGDE).

Belongs to the ABC transporter superfamily. In terms of assembly, the complex is composed of two ATP-binding proteins (OpuCA), two transmembrane proteins (OpuCB and OpuCD) and a solute-binding protein (OpuCC).

Its activity is regulated as follows. Binds cyclic di-AMP (c-di-AMP), which may regulate the transporter activity. Involved in a high affinity multicomponent binding-protein-dependent transport system for glycine betaine, carnitine and choline; probably responsible for energy coupling to the transport system. The polypeptide is Glycine betaine/carnitine/choline transport ATP-binding protein OpuCA (opuCA) (Bacillus subtilis (strain 168)).